Reading from the N-terminus, the 460-residue chain is tRNA (guanine(10)-N(2))-methyltransferase TRMT11 (460 aa).

Residue Ala2 is modified to N-acetylalanine.

This sequence belongs to the class I-like SAM-binding methyltransferase superfamily. TRM11 methyltransferase family. Part of the heterodimeric TRMT11-TRM112 methyltransferase complex; this complex forms an active tRNA methyltransferase, where TRMT112 acts as an activator of the catalytic subunit TRMT11.

Its subcellular location is the cytoplasm. The catalysed reaction is guanosine(10) in tRNA + S-adenosyl-L-methionine = N(2)-methylguanosine(10) in tRNA + S-adenosyl-L-homocysteine + H(+). Its function is as follows. Catalytic subunit of the TRMT11-TRM112 methyltransferase complex, that specifically mediates the S-adenosyl-L-methionine-dependent N(2)-methylation of guanosine nucleotide at position 10 (m2G10) in tRNAs. This is one of the major tRNA (guanine-N(2))-methyltransferases. The protein is tRNA (guanine(10)-N(2))-methyltransferase TRMT11 of Mus musculus (Mouse).